A 321-amino-acid polypeptide reads, in one-letter code: CRISPR-associated aCascade subunit Cas7/Csa2 2 (321 aa).

Belongs to the CRISPR-associated protein Cas7/Cst2/DevR family. Subtype I-a/Apern subfamily. In terms of assembly, part of the aCascade ribonucleoprotein complex, minimally composed of Csa2 and Cas5a, which binds crRNA. Other possible components of aCascade in strain P1 are Cas6b (SSO1437) and Csa5 (SSO1443), while SSO1399, Cas5b (SSO1400) and SSO1401 have sometimes been seen weakly associated. Csa2 is probably the major RNA-binding subunit. The Csa2-Cas5a-crRNA complex also binds target DNA homologous to crRNA, probably forming an R-loop. Purified aCascade forms a filament about 6 nm in width.

Functionally, CRISPR (clustered regularly interspaced short palindromic repeat) is an adaptive immune system that provides protection against mobile genetic elements (viruses, transposable elements and conjugative plasmids). CRISPR clusters contain spacers, sequences complementary to antecedent mobile elements, and target invading nucleic acids. CRISPR clusters are transcribed and processed into CRISPR RNA (crRNA). This Saccharolobus solfataricus (strain ATCC 35092 / DSM 1617 / JCM 11322 / P2) (Sulfolobus solfataricus) protein is CRISPR-associated aCascade subunit Cas7/Csa2 2 (csa2b).